The following is a 430-amino-acid chain: Serine--tRNA ligase (430 aa).

237-239 (TAE) contributes to the L-serine binding site. ATP is bound at residue 268-270 (RSE). Glu291 contacts L-serine. 355 to 358 (EISS) contacts ATP. Ser391 is an L-serine binding site.

Belongs to the class-II aminoacyl-tRNA synthetase family. Type-1 seryl-tRNA synthetase subfamily. As to quaternary structure, homodimer. The tRNA molecule binds across the dimer.

It localises to the cytoplasm. The enzyme catalyses tRNA(Ser) + L-serine + ATP = L-seryl-tRNA(Ser) + AMP + diphosphate + H(+). The catalysed reaction is tRNA(Sec) + L-serine + ATP = L-seryl-tRNA(Sec) + AMP + diphosphate + H(+). Its pathway is aminoacyl-tRNA biosynthesis; selenocysteinyl-tRNA(Sec) biosynthesis; L-seryl-tRNA(Sec) from L-serine and tRNA(Sec): step 1/1. In terms of biological role, catalyzes the attachment of serine to tRNA(Ser). Is also able to aminoacylate tRNA(Sec) with serine, to form the misacylated tRNA L-seryl-tRNA(Sec), which will be further converted into selenocysteinyl-tRNA(Sec). The polypeptide is Serine--tRNA ligase (Escherichia coli O139:H28 (strain E24377A / ETEC)).